We begin with the raw amino-acid sequence, 390 residues long: 1-deoxy-D-xylulose 5-phosphate reductoisomerase (390 aa).

Residues Thr-18, Gly-19, Ser-20, Ile-21, and Asn-130 each coordinate NADPH. Lys-131 contacts 1-deoxy-D-xylulose 5-phosphate. Glu-132 contributes to the NADPH binding site. Asp-156 is a Mn(2+) binding site. 4 residues coordinate 1-deoxy-D-xylulose 5-phosphate: Ser-157, Glu-158, Ser-182, and His-205. Glu-158 is a Mn(2+) binding site. Gly-211 lines the NADPH pocket. Residues Ser-218, Asn-223, Lys-224, and Glu-227 each contribute to the 1-deoxy-D-xylulose 5-phosphate site. Glu-227 serves as a coordination point for Mn(2+).

Belongs to the DXR family. Mg(2+) serves as cofactor. Mn(2+) is required as a cofactor.

The catalysed reaction is 2-C-methyl-D-erythritol 4-phosphate + NADP(+) = 1-deoxy-D-xylulose 5-phosphate + NADPH + H(+). The protein operates within isoprenoid biosynthesis; isopentenyl diphosphate biosynthesis via DXP pathway; isopentenyl diphosphate from 1-deoxy-D-xylulose 5-phosphate: step 1/6. Catalyzes the NADPH-dependent rearrangement and reduction of 1-deoxy-D-xylulose-5-phosphate (DXP) to 2-C-methyl-D-erythritol 4-phosphate (MEP). The sequence is that of 1-deoxy-D-xylulose 5-phosphate reductoisomerase from Bacteroides thetaiotaomicron (strain ATCC 29148 / DSM 2079 / JCM 5827 / CCUG 10774 / NCTC 10582 / VPI-5482 / E50).